Here is a 435-residue protein sequence, read N- to C-terminus: 26S proteasome regulatory subunit 7 (435 aa).

Over residues 1–23 the composition is skewed to basic and acidic residues; the sequence is MPDHLGDDMRKTKKDDTKEEEKN. Positions 1-24 are disordered; that stretch reads MPDHLGDDMRKTKKDDTKEEEKNF. 218-225 contributes to the ATP binding site; sequence GPPGTGKT.

The protein belongs to the AAA ATPase family.

It is found in the cytoplasm. Its subcellular location is the nucleus. The 26S proteasome is involved in the ATP-dependent degradation of ubiquitinated proteins. The regulatory (or ATPase) complex confers ATP dependency and substrate specificity to the 26S complex. This is 26S proteasome regulatory subunit 7 (rpt-1) from Caenorhabditis elegans.